We begin with the raw amino-acid sequence, 222 residues long: Voltage-dependent calcium channel gamma-1 subunit (222 aa).

Over 1–10 (MSQTKMLKVR) the chain is Cytoplasmic. The chain crosses the membrane as a helical span at residues 11 to 29 (VTLFCILAGIVLAMTAVVT). Topologically, residues 30 to 108 (DHWAVLSPHM…TQKEYSISAA (79 aa)) are extracellular. Asparagine 43 and asparagine 79 each carry an N-linked (GlcNAc...) asparagine glycan. A disulfide bond links cysteine 57 and cysteine 80. Residues 109–129 (AIAIFSLGFIILGSLCVLLSL) form a helical membrane-spanning segment. Residues 130–134 (GKKRD) lie on the Cytoplasmic side of the membrane. Residues 135 to 155 (YLLRPASMFYAFAGLCILVSV) form a helical membrane-spanning segment. The Extracellular segment spans residues 156–179 (EVMRQSVKRMIDSEDTVWIEYYYS). The chain crosses the membrane as a helical span at residues 180–204 (WSFACACAAFILLFLGGLALLLFSL). Residues 205–222 (PRMPRNPWESCMDAEPEH) lie on the Cytoplasmic side of the membrane.

The protein belongs to the PMP-22/EMP/MP20 family. CACNG subfamily. In terms of assembly, component of a calcium channel complex consisting of a pore-forming alpha subunit (CACNA1S) and the ancillary subunits CACNB1 or CACNB2, CACNG1 and CACNA2D1. The channel complex contains alpha, beta, gamma and delta subunits in a 1:1:1:1 ratio, i.e. it contains either CACNB1 or CACNB2. Post-translationally, N-glycosylated. Skeletal muscle.

It localises to the cell membrane. The protein resides in the sarcolemma. Regulatory subunit of the voltage-gated calcium channel that gives rise to L-type calcium currents in skeletal muscle. Regulates channel inactivation kinetics. The polypeptide is Voltage-dependent calcium channel gamma-1 subunit (CACNG1) (Homo sapiens (Human)).